Reading from the N-terminus, the 330-residue chain is Free fatty acid receptor 2 (330 aa).

At 1 to 8 (MTPDWHSS) the chain is on the extracellular side. Residues 9–29 (LILTAYILIFLTGLPANLLAL) traverse the membrane as a helical segment. Residues 30 to 43 (RAFVSRVRQPQPAP) lie on the Cytoplasmic side of the membrane. A helical transmembrane segment spans residues 44-64 (VHILLLNLTLADLLLLLLLPF). The Extracellular segment spans residues 65–79 (RIVEAASNFRWYLPK). The chain crosses the membrane as a helical span at residues 80-100 (IVCALTGFGFYSSIYCSTWLL). Residues 101-126 (AGISIERYLGVAFPVQYKLSRRPLYG) are Cytoplasmic-facing. Residues 127 to 147 (VIAALVAWIMSFGHCTIVIIV) form a helical membrane-spanning segment. The Extracellular portion of the chain corresponds to 148 to 184 (QYLNSTEQVGTENQITCYENFTQAQLDVVLPVRLELC). Asparagine 151 and asparagine 167 each carry an N-linked (GlcNAc...) asparagine glycan. A helical membrane pass occupies residues 185-205 (LVLFFVPMTVTIFCYWRFVWI). The Cytoplasmic portion of the chain corresponds to 206–219 (MLTQPHVGAQRRRR). The chain crosses the membrane as a helical span at residues 220–240 (AVGLAVVTLLNFLVCFGPYNM). At 241 to 255 (SHLVGFHLRQSPSWR) the chain is on the extracellular side. Residues 256–276 (VEAVVFSSLNASLDPLLFYFS) traverse the membrane as a helical segment. The Cytoplasmic segment spans residues 277-330 (SSVVRRAFGKGLLLLRNPGSSMLGRGAEETVEGTKTDRGGSQTEGAQSSDFVTE). A disordered region spans residues 300–330 (GRGAEETVEGTKTDRGGSQTEGAQSSDFVTE). Positions 302–314 (GAEETVEGTKTDR) are enriched in basic and acidic residues. Residues 315–330 (GGSQTEGAQSSDFVTE) show a composition bias toward polar residues.

This sequence belongs to the G-protein coupled receptor 1 family. Interacts with FCN1 (via Fibrinogen C-terminal domain). Detected in whole wall and separated mucosa in the distal ileum and colon. Expressed by enteroendocrine cells expressing peptide YY (PYY) (at protein level).

The protein resides in the cell membrane. In terms of biological role, g protein-coupled receptor that is activated by a major product of dietary fiber digestion, the short chain fatty acids (SCFAs), and that plays a role in the regulation of whole-body energy homeostasis and in intestinal immunity. In omnivorous mammals, the short chain fatty acids acetate, propionate and butyrate are produced primarily by the gut microbiome that metabolizes dietary fibers. SCFAs serve as a source of energy but also act as signaling molecules. That G protein-coupled receptor is probably coupled to the pertussis toxin-sensitive, G(i/o)-alpha family of G proteins but also to the Gq family. Its activation results in the formation of inositol 1,4,5-trisphosphate, the mobilization of intracellular calcium, the phosphorylation of the MAPK3/ERK1 and MAPK1/ERK2 kinases and the inhibition of intracellular cAMP accumulation. May play a role in glucose homeostasis by regulating the secretion of GLP-1, in response to short-chain fatty acids accumulating in the intestine. May also regulate the production of LEP/Leptin, a hormone acting on the central nervous system to inhibit food intake. Finally, may also regulate whole-body energy homeostasis through adipogenesis regulating both differentiation and lipid storage of adipocytes. In parallel to its role in energy homeostasis, may also mediate the activation of the inflammatory and immune responses by SCFA in the intestine, regulating the rapid production of chemokines and cytokines. May also play a role in the resolution of the inflammatory response and control chemotaxis in neutrophils. In addition to SCFAs, may also be activated by the extracellular lectin FCN1 in a process leading to activation of monocytes and inducing the secretion of interleukin-8/IL-8 in response to the presence of microbes. In Rattus norvegicus (Rat), this protein is Free fatty acid receptor 2 (Ffar2).